A 379-amino-acid chain; its full sequence is Queuine tRNA-ribosyltransferase (379 aa).

The active-site Proton acceptor is the Asp-94. Residues Asp-94–Phe-98, Asp-148, Gln-191, and Gly-218 contribute to the substrate site. Residues Gly-249–Ser-255 are RNA binding. Asp-268 (nucleophile) is an active-site residue. An RNA binding; important for wobble base 34 recognition region spans residues Thr-273–Arg-277. The Zn(2+) site is built by Cys-306, Cys-308, Cys-311, and His-337.

Belongs to the queuine tRNA-ribosyltransferase family. As to quaternary structure, homodimer. Within each dimer, one monomer is responsible for RNA recognition and catalysis, while the other monomer binds to the replacement base PreQ1. It depends on Zn(2+) as a cofactor.

The enzyme catalyses 7-aminomethyl-7-carbaguanine + guanosine(34) in tRNA = 7-aminomethyl-7-carbaguanosine(34) in tRNA + guanine. It functions in the pathway tRNA modification; tRNA-queuosine biosynthesis. Its function is as follows. Catalyzes the base-exchange of a guanine (G) residue with the queuine precursor 7-aminomethyl-7-deazaguanine (PreQ1) at position 34 (anticodon wobble position) in tRNAs with GU(N) anticodons (tRNA-Asp, -Asn, -His and -Tyr). Catalysis occurs through a double-displacement mechanism. The nucleophile active site attacks the C1' of nucleotide 34 to detach the guanine base from the RNA, forming a covalent enzyme-RNA intermediate. The proton acceptor active site deprotonates the incoming PreQ1, allowing a nucleophilic attack on the C1' of the ribose to form the product. After dissociation, two additional enzymatic reactions on the tRNA convert PreQ1 to queuine (Q), resulting in the hypermodified nucleoside queuosine (7-(((4,5-cis-dihydroxy-2-cyclopenten-1-yl)amino)methyl)-7-deazaguanosine). The protein is Queuine tRNA-ribosyltransferase of Listeria monocytogenes serovar 1/2a (strain ATCC BAA-679 / EGD-e).